The primary structure comprises 202 residues: Small ribosomal subunit protein uS4c (202 aa).

Residues 13–37 (RRPGVSPGLTSKTLKSKSNYIDRST) form a disordered region. The span at 20-37 (GLTSKTLKSKSNYIDRST) shows a compositional bias: polar residues. One can recognise an S4 RNA-binding domain in the interval 90 to 153 (MRLDNTIFRL…ESRSMISKNI (64 aa)).

Belongs to the universal ribosomal protein uS4 family. Part of the 30S ribosomal subunit. Contacts protein S5. The interaction surface between S4 and S5 is involved in control of translational fidelity.

The protein localises to the plastid. It is found in the chloroplast. One of the primary rRNA binding proteins, it binds directly to 16S rRNA where it nucleates assembly of the body of the 30S subunit. Functionally, with S5 and S12 plays an important role in translational accuracy. The protein is Small ribosomal subunit protein uS4c (rps4) of Takakia lepidozioides (Moss).